Reading from the N-terminus, the 159-residue chain is 2-C-methyl-D-erythritol 2,4-cyclodiphosphate synthase (159 aa).

A divalent metal cation is bound by residues Asp10 and His12. 4-CDP-2-C-methyl-D-erythritol 2-phosphate-binding positions include 10–12 (DVH) and 36–37 (HS). His44 contacts a divalent metal cation. 4-CDP-2-C-methyl-D-erythritol 2-phosphate contacts are provided by residues 58-60 (DIG), 134-137 (TTTE), Phe141, and Arg144.

The protein belongs to the IspF family. Homotrimer. It depends on a divalent metal cation as a cofactor.

It catalyses the reaction 4-CDP-2-C-methyl-D-erythritol 2-phosphate = 2-C-methyl-D-erythritol 2,4-cyclic diphosphate + CMP. The protein operates within isoprenoid biosynthesis; isopentenyl diphosphate biosynthesis via DXP pathway; isopentenyl diphosphate from 1-deoxy-D-xylulose 5-phosphate: step 4/6. Its function is as follows. Involved in the biosynthesis of isopentenyl diphosphate (IPP) and dimethylallyl diphosphate (DMAPP), two major building blocks of isoprenoid compounds. Catalyzes the conversion of 4-diphosphocytidyl-2-C-methyl-D-erythritol 2-phosphate (CDP-ME2P) to 2-C-methyl-D-erythritol 2,4-cyclodiphosphate (ME-CPP) with a corresponding release of cytidine 5-monophosphate (CMP). In Bacteroides fragilis (strain YCH46), this protein is 2-C-methyl-D-erythritol 2,4-cyclodiphosphate synthase.